We begin with the raw amino-acid sequence, 521 residues long: AAA ATPase forming ring-shaped complexes (521 aa).

Positions 4 to 44 form a coiled coil; it reads TEDLAALNDRLMAKNHALAEALSRAGKELTKAKSQLAQLAQ. ATP is bound at residue 235 to 240; that stretch reads GNGKTM.

It belongs to the AAA ATPase family. As to quaternary structure, homohexamer. Assembles into a hexameric ring structure.

The sequence is that of AAA ATPase forming ring-shaped complexes from Bifidobacterium longum (strain NCC 2705).